Reading from the N-terminus, the 206-residue chain is Holliday junction branch migration complex subunit RuvA (206 aa).

The interval 1-64 (MIGKLKGTVD…EDQIRLFGFV (64 aa)) is domain I. A domain II region spans residues 65–143 (TEAEREWFRL…AFTAADPGLA (79 aa)). Residues 144 to 154 (RLAADVEATEA) form a flexible linker region. The domain III stretch occupies residues 154 to 206 (AAGGALADAVSALVNLGYGQAQAHTAIAAAGRKAGEDATTETLIRLGLKELAK).

The protein belongs to the RuvA family. Homotetramer. Forms an RuvA(8)-RuvB(12)-Holliday junction (HJ) complex. HJ DNA is sandwiched between 2 RuvA tetramers; dsDNA enters through RuvA and exits via RuvB. An RuvB hexamer assembles on each DNA strand where it exits the tetramer. Each RuvB hexamer is contacted by two RuvA subunits (via domain III) on 2 adjacent RuvB subunits; this complex drives branch migration. In the full resolvosome a probable DNA-RuvA(4)-RuvB(12)-RuvC(2) complex forms which resolves the HJ.

Its subcellular location is the cytoplasm. Functionally, the RuvA-RuvB-RuvC complex processes Holliday junction (HJ) DNA during genetic recombination and DNA repair, while the RuvA-RuvB complex plays an important role in the rescue of blocked DNA replication forks via replication fork reversal (RFR). RuvA specifically binds to HJ cruciform DNA, conferring on it an open structure. The RuvB hexamer acts as an ATP-dependent pump, pulling dsDNA into and through the RuvAB complex. HJ branch migration allows RuvC to scan DNA until it finds its consensus sequence, where it cleaves and resolves the cruciform DNA. The chain is Holliday junction branch migration complex subunit RuvA from Azorhizobium caulinodans (strain ATCC 43989 / DSM 5975 / JCM 20966 / LMG 6465 / NBRC 14845 / NCIMB 13405 / ORS 571).